Here is a 37-residue protein sequence, read N- to C-terminus: Esculentin-2P (37 aa).

An intrachain disulfide couples Cys-31 to Cys-37.

As to expression, expressed by the skin glands.

The protein localises to the secreted. Functionally, antibacterial activity against Gram-negative bacterium E.coli. The chain is Esculentin-2P from Lithobates pipiens (Northern leopard frog).